Consider the following 276-residue polypeptide: MRNIGIIINKEKDKENKILNLVILKVKEYLNPDEIKVIDQFYKGDYKDLMSLDLLIVLGGDGTLLGVARKFSTVIDTPILGINIGNLGFLVTAEISELDEALYRIKVGDYKVEERMLLSCTIEGVTCSEERALNDIVVARGTLSRMAQYEVFINDELYATFKGDGVIISTPVGSTAYSFSAGGPLIMPDLQIVSIVPICPHTPNSRPMIIDGNNKVRVKPLINESDVFVTIDGQKALKLEKHNEVLIKKAKEFFRIISFDNKSYFKVLRKKLFKIE.

Aspartate 61 serves as the catalytic Proton acceptor. Residues 61 to 62 (DG), 134 to 135 (ND), arginine 145, lysine 162, aspartate 164, valine 172, 175 to 180 (TAYSFS), and glutamine 234 each bind NAD(+).

This sequence belongs to the NAD kinase family. A divalent metal cation serves as cofactor.

The protein localises to the cytoplasm. The catalysed reaction is NAD(+) + ATP = ADP + NADP(+) + H(+). Involved in the regulation of the intracellular balance of NAD and NADP, and is a key enzyme in the biosynthesis of NADP. Catalyzes specifically the phosphorylation on 2'-hydroxyl of the adenosine moiety of NAD to yield NADP. The protein is NAD kinase of Clostridium perfringens (strain 13 / Type A).